The following is a 363-amino-acid chain: Protein U2 (363 aa).

The N-terminal stretch at Met-1–Ala-18 is a signal peptide.

The sequence is that of Protein U2 (U2) from Homo sapiens (Human).